Consider the following 1087-residue polypeptide: Exoglucanase XynX (1087 aa).

A signal peptide spans 1-30; it reads MKNNLSKFVSIFTAFIMIFGTSLFFPHVSA. A CBM-cenC domain is found at 37 to 188; it reads ANLVSNGDFE…YIDDVVVTPQ (152 aa). The 324-residue stretch at 204–527 folds into the GH10 domain; the sequence is QNDIPDLSSV…KPAYWAIADP (324 aa). Glutamate 347 serves as the catalytic Proton donor. The active site involves aspartate 389. The Nucleophile role is filled by glutamate 452. SLH domains follow at residues 903–966, 967–1025, and 1028–1087; these read KKSV…YNGE, FSDV…KEEN, and ATSF…SNNL.

The protein belongs to the glycosyl hydrolase 10 (cellulase F) family.

It catalyses the reaction Hydrolysis of (1-&gt;4)-beta-D-glucosidic linkages in cellulose and cellotetraose, releasing cellobiose from the non-reducing ends of the chains.. This chain is Exoglucanase XynX (xynX), found in Acetivibrio thermocellus (Hungateiclostridium thermocellum).